The primary structure comprises 87 residues: DNA-directed RNA polymerase subunit omega (87 aa).

Belongs to the RNA polymerase subunit omega family. In terms of assembly, the RNAP catalytic core consists of 2 alpha, 1 beta, 1 beta' and 1 omega subunit. When a sigma factor is associated with the core the holoenzyme is formed, which can initiate transcription.

It catalyses the reaction RNA(n) + a ribonucleoside 5'-triphosphate = RNA(n+1) + diphosphate. Promotes RNA polymerase assembly. Latches the N- and C-terminal regions of the beta' subunit thereby facilitating its interaction with the beta and alpha subunits. The protein is DNA-directed RNA polymerase subunit omega of Pseudomonas fluorescens (strain Pf0-1).